We begin with the raw amino-acid sequence, 494 residues long: DDB1- and CUL4-associated factor 4 (494 aa).

Positions 1–65 (MHQSSWKSRR…AGSSSVPDLP (65 aa)) are disordered. Residues 7–20 (KSRRHRRRGHRHSA) show a composition bias toward basic residues. Low complexity predominate over residues 51–60 (STSSTAGSSS). 2 WD repeats span residues 367-406 (FHDS…CIRQ) and 409-450 (GHVN…LLRT).

Interacts with DDB1 and CUL4A.

The protein operates within protein modification; protein ubiquitination. May function as a substrate receptor for CUL4-DDB1 E3 ubiquitin-protein ligase complex. The sequence is that of DDB1- and CUL4-associated factor 4 (DCAF4) from Bos taurus (Bovine).